A 507-amino-acid chain; its full sequence is Protein FAM221B (507 aa).

Disordered regions lie at residues 1–100, 154–310, and 486–507; these read MEAD…SAQS, LLSP…ESRP, and ETKR…HRPF. Residues 88-100 are compositionally biased toward polar residues; it reads NLPSTPSQSSAQS. Residues 167 to 177 show a composition bias toward acidic residues; the sequence is SISDVQEEPLE. The segment covering 182–193 has biased composition (polar residues); the sequence is ADISETEYSISD. Composition is skewed to acidic residues over residues 208 to 222 and 270 to 281; these read PESE…EEPL and SADEEEAEEEEL. S270 carries the phosphoserine modification.

It belongs to the FAM221 family.

The protein is Protein FAM221B (Fam221b) of Rattus norvegicus (Rat).